A 61-amino-acid polypeptide reads, in one-letter code: Alpha-conotoxin-like Lp1.6a (61 aa).

The first 21 residues, 1–21 (MGMRMMFIIFLFVVLATTVVS), serve as a signal peptide directing secretion. Residues 22–44 (FTSGRASDGRNAPANNKVSDLIR) constitute a propeptide that is removed on maturation. Gln-45 bears the Pyrrolidone carboxylic acid mark. 2 disulfide bridges follow: Cys-47–Cys-53 and Cys-48–Cys-60. Cys-60 is modified (cysteine amide).

Belongs to the conotoxin A superfamily. In terms of tissue distribution, expressed by the venom duct.

It localises to the secreted. Functionally, alpha-conotoxins act on postsynaptic membranes, they bind to the nicotinic acetylcholine receptors (nAChR) and thus inhibit them. In Conus leopardus (Leopard cone), this protein is Alpha-conotoxin-like Lp1.6a.